The following is a 239-amino-acid chain: Glucosamine-6-phosphate deaminase (239 aa).

D62 functions as the Proton acceptor; for enolization step in the catalytic mechanism. N128 (for ring-opening step) is an active-site residue. Catalysis depends on H130, which acts as the Proton acceptor; for ring-opening step. The active-site For ring-opening step is the E135.

Belongs to the glucosamine/galactosamine-6-phosphate isomerase family. NagB subfamily.

It catalyses the reaction alpha-D-glucosamine 6-phosphate + H2O = beta-D-fructose 6-phosphate + NH4(+). The protein operates within amino-sugar metabolism; N-acetylneuraminate degradation; D-fructose 6-phosphate from N-acetylneuraminate: step 5/5. Catalyzes the reversible isomerization-deamination of glucosamine 6-phosphate (GlcN6P) to form fructose 6-phosphate (Fru6P) and ammonium ion. In Lactobacillus acidophilus (strain ATCC 700396 / NCK56 / N2 / NCFM), this protein is Glucosamine-6-phosphate deaminase.